We begin with the raw amino-acid sequence, 358 residues long: Heme A synthase (358 aa).

8 consecutive transmembrane segments (helical) span residues I22–A42, I107–K127, I139–I159, A173–F193, F208–G228, F269–V289, A302–R322, and V324–V344. Position 271 (H271) interacts with heme. Residue H332 participates in heme binding.

It belongs to the COX15/CtaA family. Type 2 subfamily. Interacts with CtaB. It depends on heme b as a cofactor.

The protein localises to the cell membrane. It catalyses the reaction Fe(II)-heme o + 2 A + H2O = Fe(II)-heme a + 2 AH2. It functions in the pathway porphyrin-containing compound metabolism; heme A biosynthesis; heme A from heme O: step 1/1. Functionally, catalyzes the conversion of heme O to heme A by two successive hydroxylations of the methyl group at C8. The first hydroxylation forms heme I, the second hydroxylation results in an unstable dihydroxymethyl group, which spontaneously dehydrates, resulting in the formyl group of heme A. This is Heme A synthase from Bartonella quintana (strain Toulouse) (Rochalimaea quintana).